The sequence spans 40 residues: Photosystem I reaction center subunit IX (40 aa).

Residues F4–V24 form a helical membrane-spanning segment.

Belongs to the PsaJ family.

Its subcellular location is the cellular thylakoid membrane. Its function is as follows. May help in the organization of the PsaE and PsaF subunits. This is Photosystem I reaction center subunit IX from Prochlorococcus marinus (strain MIT 9313).